The primary structure comprises 262 residues: Sperm microtubule inner protein 6 (262 aa).

Belongs to the SPMIP6 family. Microtubule inner protein component of sperm flagellar doublet microtubules. Interacts with alpha-tubulin.

It is found in the cytoplasm. The protein resides in the cytoskeleton. Its subcellular location is the nucleus. It localises to the mitochondrion. The protein localises to the flagellum axoneme. May participate in intramanchette transport and midpiece formation of the sperm tail. May play a potential role in somatic cell proliferation. In Macaca fascicularis (Crab-eating macaque), this protein is Sperm microtubule inner protein 6 (SPMIP6).